Consider the following 350-residue polypeptide: C5a anaphylatoxin chemotactic receptor 1 (350 aa).

Over 1-37 (MDSFDYTTPDYGHYDDKDTLDLNTPVDKTSNTLRVPD) the chain is Extracellular. The interval 10–18 (DYGHYDDKD) is required for CHIPS binding. A sulfotyrosine mark is found at Y11 and Y14. Residues 21 to 30 (DLNTPVDKTS) form an involved in C5a binding region. A helical transmembrane segment spans residues 38-64 (ILALVIFAVVFLVGVLGNALVVWVTAF). Residues 65–69 (EAKRT) are Cytoplasmic-facing. Residues 70–93 (INAIWFLNLAVADFLSCLALPILF) traverse the membrane as a helical segment. The Extracellular segment spans residues 94-110 (TSIVQHHHWPFGGAACS). Residues C109 and C188 are joined by a disulfide bond. A helical membrane pass occupies residues 111-132 (ILPSLILLNMYASILLLATISA). At 133-153 (DRFLLVFKPIWCQNFRGAGLA) the chain is on the cytoplasmic side. A helical transmembrane segment spans residues 154–174 (WIACAVAWGLALLLTIPSFLY). Residues 175 to 200 (RVVREEYFPPKVLCGVDYSHDKRRER) are Extracellular-facing. A helical membrane pass occupies residues 201-226 (AVAIVRLVLGFLWPLLTLMICYTFIL). Over 227–242 (LRTWSRRATRSTKTLK) the chain is Cytoplasmic. A helical membrane pass occupies residues 243 to 265 (VVVAVVASFFIFWLPYQVTGIMM). At 266–282 (SFLEPSSPTFRLLKKLD) the chain is on the extracellular side. A helical transmembrane segment spans residues 283-303 (SLCVSFAYINCCINPIIYVVA). The Cytoplasmic portion of the chain corresponds to 304–350 (GQGFQGRLQKSLPSLLRNVLTEESVVRESKSFARSTVDTMADKTQAV). Phosphoserine is present on residues S314, S317, S327, S332, S334, and S338.

The protein belongs to the G-protein coupled receptor 1 family. In terms of assembly, homodimer. May also form higher-order oligomers. Interacts (when phosphorylated) with ARRB1 and ARRB2; the interaction is associated with internalization of C5aR. Interacts (via N-terminal domain) with S.aureus chemotaxis inhibitory protein (CHIPS); the interaction blocks the receptor and may thus inhibit the immune response. In terms of processing, sulfation plays a critical role in the association of C5aR with C5a, but no significant role in the ability of the receptor to transduce a signal and mobilize calcium in response to a small peptide agonist. Sulfation at Tyr-14 is important for CHIPS binding. Post-translationally, phosphorylated on serine residues in response to C5a binding, resulting in internalization of the receptor and short-term desensitization to C5a.

The protein resides in the cell membrane. Its subcellular location is the cytoplasmic vesicle. Receptor for the chemotactic and inflammatory peptide anaphylatoxin C5a. The ligand interacts with at least two sites on the receptor: a high-affinity site on the extracellular N-terminus, and a second site in the transmembrane region which activates downstream signaling events. Receptor activation stimulates chemotaxis, granule enzyme release, intracellular calcium release and superoxide anion production. The sequence is that of C5a anaphylatoxin chemotactic receptor 1 (C5AR1) from Pan troglodytes (Chimpanzee).